The following is a 182-amino-acid chain: Fatty-acid and retinol-binding protein 2 (182 aa).

Residues 1–17 (MIRAFLVVALASVAVFS) form the signal peptide. Coiled-coil stretches lie at residues 46–73 (LKAITAEEKAALKELAQNHKEYKTEEEF) and 131–152 (TLDSLKELAKGYIAEYKALSDD).

It belongs to the fatty-acid and retinol-binding protein (FARBP) family.

It is found in the secreted. Its function is as follows. Probably binds lipids. The protein is Fatty-acid and retinol-binding protein 2 (far-2) of Caenorhabditis elegans.